Reading from the N-terminus, the 206-residue chain is Thiamine-phosphate synthase (206 aa).

4-amino-2-methyl-5-(diphosphooxymethyl)pyrimidine contacts are provided by residues 36-40 and N68; that span reads QLRMK. Residues D69 and D88 each contribute to the Mg(2+) site. A 4-amino-2-methyl-5-(diphosphooxymethyl)pyrimidine-binding site is contributed by S106. A 2-[(2R,5Z)-2-carboxy-4-methylthiazol-5(2H)-ylidene]ethyl phosphate-binding site is contributed by 132 to 134; sequence TNT. K135 is a 4-amino-2-methyl-5-(diphosphooxymethyl)pyrimidine binding site. Residues G162 and 182–183 each bind 2-[(2R,5Z)-2-carboxy-4-methylthiazol-5(2H)-ylidene]ethyl phosphate; that span reads VS.

It belongs to the thiamine-phosphate synthase family. The cofactor is Mg(2+).

It carries out the reaction 2-[(2R,5Z)-2-carboxy-4-methylthiazol-5(2H)-ylidene]ethyl phosphate + 4-amino-2-methyl-5-(diphosphooxymethyl)pyrimidine + 2 H(+) = thiamine phosphate + CO2 + diphosphate. It catalyses the reaction 2-(2-carboxy-4-methylthiazol-5-yl)ethyl phosphate + 4-amino-2-methyl-5-(diphosphooxymethyl)pyrimidine + 2 H(+) = thiamine phosphate + CO2 + diphosphate. The enzyme catalyses 4-methyl-5-(2-phosphooxyethyl)-thiazole + 4-amino-2-methyl-5-(diphosphooxymethyl)pyrimidine + H(+) = thiamine phosphate + diphosphate. It participates in cofactor biosynthesis; thiamine diphosphate biosynthesis; thiamine phosphate from 4-amino-2-methyl-5-diphosphomethylpyrimidine and 4-methyl-5-(2-phosphoethyl)-thiazole: step 1/1. Condenses 4-methyl-5-(beta-hydroxyethyl)thiazole monophosphate (THZ-P) and 2-methyl-4-amino-5-hydroxymethyl pyrimidine pyrophosphate (HMP-PP) to form thiamine monophosphate (TMP). This is Thiamine-phosphate synthase from Methanococcus vannielii (strain ATCC 35089 / DSM 1224 / JCM 13029 / OCM 148 / SB).